Consider the following 110-residue polypeptide: Putative protein RIG (110 aa).

In terms of tissue distribution, expressed predominantly in brain and weakly in heart and lung. Expression is reduced or undetectable in cultured glioma cells, primary glioblastoma cells and malignant glioblastoma tumors.

Its function is as follows. May serve as a molecular marker for or play a role in the malignant progression of glioblastomas. In Homo sapiens (Human), this protein is Putative protein RIG (RIG).